Here is a 602-residue protein sequence, read N- to C-terminus: MKEYKLENIRNFSIIAHIDHGKSTIADRLLESTSTVEQREMREQLLDSMDLERERGITIKAHPVTMYYKYNGEVYQLNLIDTPGHVDFSYEVSRSLTACEGALLIVDAAQGVQAQSLANVYLALERDLEIIPILNKIDLPAANPEKIRKQIEDYIGLDTTHAIACSAKTGEGISEILEAIVELIPPPKSPEETELKALIFDSHYDPYVGIMVYVRVMSGEIKKGDRITFMATKGSSFEVLGVGAFLPEATLIEGSLRAGQVGYFIANLKKVKDVKIGDTVTTVKHSAKVPLEGFKEINPVMFAGIYPIDSSDFDALKDALSRLQLNDSALTIEQESSHSLGFGFRCGFLGLLHLEIVFERIIREFDLDIIATAPSVIYKVVLKNGKTLFIDNPTAYPDPSIIEHMEEPWVHVNIITPQEYLSSIMNLCLDKRGVCLKTEMLDQHRLVLSYDLPLNEIVSDFNDKLKSVTKGYGSFDYRLGDYRKGSIIKLEILINDEPVDAFSCLVHRDKAEARGRSICEKLVGVIPQQLFKIPIQAAINKKVIARETIRALSKNVTAKCYGGDITRKRKLWEKQKKGKKRMKEFGKVSIPNTAFIEVLKID.

Positions 7 to 188 (ENIRNFSIIA…AIVELIPPPK (182 aa)) constitute a tr-type G domain. GTP-binding positions include 19–24 (DHGKST) and 135–138 (NKID).

It belongs to the TRAFAC class translation factor GTPase superfamily. Classic translation factor GTPase family. LepA subfamily.

Its subcellular location is the cell inner membrane. The enzyme catalyses GTP + H2O = GDP + phosphate + H(+). Its function is as follows. Required for accurate and efficient protein synthesis under certain stress conditions. May act as a fidelity factor of the translation reaction, by catalyzing a one-codon backward translocation of tRNAs on improperly translocated ribosomes. Back-translocation proceeds from a post-translocation (POST) complex to a pre-translocation (PRE) complex, thus giving elongation factor G a second chance to translocate the tRNAs correctly. Binds to ribosomes in a GTP-dependent manner. The chain is Elongation factor 4 from Chlamydia abortus (strain DSM 27085 / S26/3) (Chlamydophila abortus).